The primary structure comprises 317 residues: Ribose-phosphate pyrophosphokinase A (317 aa).

Mg(2+) is bound by residues Asp130, His132, and Asp145. A binding of phosphoribosylpyrophosphate region spans residues 212–227 (KDKVALIVDDMADTCG).

This sequence belongs to the ribose-phosphate pyrophosphokinase family. Mg(2+) serves as cofactor.

It carries out the reaction D-ribose 5-phosphate + ATP = 5-phospho-alpha-D-ribose 1-diphosphate + AMP + H(+). The protein operates within metabolic intermediate biosynthesis; 5-phospho-alpha-D-ribose 1-diphosphate biosynthesis; 5-phospho-alpha-D-ribose 1-diphosphate from D-ribose 5-phosphate (route I): step 1/1. The chain is Ribose-phosphate pyrophosphokinase A (prsA) from Dictyostelium discoideum (Social amoeba).